The following is a 147-amino-acid chain: Ribosome maturation factor RimP (147 aa).

The protein belongs to the RimP family.

Its subcellular location is the cytoplasm. Functionally, required for maturation of 30S ribosomal subunits. The sequence is that of Ribosome maturation factor RimP from Sulfurihydrogenibium azorense (strain DSM 15241 / OCM 825 / Az-Fu1).